The primary structure comprises 483 residues: Phloretin 2'-O-glucosyltransferase (483 aa).

His-15 (proton acceptor) is an active-site residue. His-15 provides a ligand contact to an anthocyanidin. The Charge relay role is filled by Asp-118. Thr-140, Ala-360, Gln-362, His-377, Trp-380, Asn-381, Ser-382, and Glu-385 together coordinate UDP-alpha-D-glucose. Ala-400 serves as a coordination point for an anthocyanidin. UDP-alpha-D-glucose-binding residues include Glu-401 and Gln-402.

The protein belongs to the UDP-glycosyltransferase family.

The enzyme catalyses phloretin + UDP-alpha-D-glucose = phlorizin + UDP + H(+). In terms of biological role, glycosyltransferase that possesses phloretin 2'-O-glycosyltransferase activity. Converts phloretin to phlorizin (phloretin 2'-O-glucoside), a potent antioxidant. Is specific for phloretin and does not possess glycosyltransferase activity toward caffeic acid, catechin, chlorogenic acid, 2-coumaric acid, 3-coumaric acid, 4-coumaric acid, cyanidin, 3,4-dihydroxyhydrocinnamic acid, epicatechin, 3-hydroxybenzoic acid, naringenin, 3,4-dihydroxybenzoic acid, quercetin and rutin. Can glycosylate phloretin in the presence of UDP-glucose, UDP-xylose and UDP-galactose. This Malus domestica (Apple) protein is Phloretin 2'-O-glucosyltransferase.